Here is a 140-residue protein sequence, read N- to C-terminus: Blasticidin-S deaminase (140 aa).

One can recognise a CMP/dCMP-type deaminase domain in the interval 8–140 (QQDLELVEVA…ELIPLKYTRN (133 aa)). Residue Cys-59 coordinates Zn(2+). Residue Glu-61 is the Proton donor of the active site. Zn(2+) is bound by residues Cys-100 and Cys-103.

The protein belongs to the cytidine and deoxycytidylate deaminase family. Requires Zn(2+) as cofactor.

It catalyses the reaction blasticidin S + H2O + H(+) = deaminohydroxyblasticidin S + NH4(+). Catalyzes the deamination of the cytosine moiety of the antibiotics blasticidin S, cytomycin and acetylblasticidin S. In Bacillus cereus, this protein is Blasticidin-S deaminase (bsr).